Reading from the N-terminus, the 568-residue chain is Proline--tRNA ligase (568 aa).

Belongs to the class-II aminoacyl-tRNA synthetase family. ProS type 1 subfamily. Homodimer.

It localises to the cytoplasm. The catalysed reaction is tRNA(Pro) + L-proline + ATP = L-prolyl-tRNA(Pro) + AMP + diphosphate. In terms of biological role, catalyzes the attachment of proline to tRNA(Pro) in a two-step reaction: proline is first activated by ATP to form Pro-AMP and then transferred to the acceptor end of tRNA(Pro). As ProRS can inadvertently accommodate and process non-cognate amino acids such as alanine and cysteine, to avoid such errors it has two additional distinct editing activities against alanine. One activity is designated as 'pretransfer' editing and involves the tRNA(Pro)-independent hydrolysis of activated Ala-AMP. The other activity is designated 'posttransfer' editing and involves deacylation of mischarged Ala-tRNA(Pro). The misacylated Cys-tRNA(Pro) is not edited by ProRS. This Chlamydia pneumoniae (Chlamydophila pneumoniae) protein is Proline--tRNA ligase.